We begin with the raw amino-acid sequence, 401 residues long: Acetate kinase (401 aa).

N7 serves as a coordination point for Mg(2+). Position 14 (K14) interacts with ATP. R96 lines the substrate pocket. The Proton donor/acceptor role is filled by D153. ATP contacts are provided by residues 212–216 (HLGNG), 287–289 (DMR), and 335–339 (GIGEN). E388 contributes to the Mg(2+) binding site.

This sequence belongs to the acetokinase family. In terms of assembly, homodimer. Mg(2+) serves as cofactor. It depends on Mn(2+) as a cofactor.

The protein localises to the cytoplasm. The catalysed reaction is acetate + ATP = acetyl phosphate + ADP. It participates in metabolic intermediate biosynthesis; acetyl-CoA biosynthesis; acetyl-CoA from acetate: step 1/2. Its function is as follows. Catalyzes the formation of acetyl phosphate from acetate and ATP. Can also catalyze the reverse reaction. The chain is Acetate kinase from Microcystis aeruginosa (strain NIES-843 / IAM M-2473).